The following is a 513-amino-acid chain: Melianol synthase CYP71BQ4 (513 aa).

Residues 10–30 form a helical membrane-spanning segment; the sequence is MLHLPSLPVLLSFLLFLLMLI. Cys451 contacts heme.

The protein belongs to the cytochrome P450 family. Requires heme as cofactor. Accumulates in mature fruits and in juice vesicles.

The protein localises to the membrane. The enzyme catalyses dihydroniloticin + 2 reduced [NADPH--hemoprotein reductase] + 2 O2 = melianol + 2 oxidized [NADPH--hemoprotein reductase] + 3 H2O + 2 H(+). It functions in the pathway secondary metabolite biosynthesis; terpenoid biosynthesis. Monooxygenase involved in the biosynthesis of limonoids triterpene natural products such as limonin, a compound with insecticidal activity responsible for the bitter taste in citrus. Catalyzes the conversion of dihydroniloticin to the protolimonoid melianol. This Citrus sinensis (Sweet orange) protein is Melianol synthase CYP71BQ4.